A 231-amino-acid polypeptide reads, in one-letter code: tRNA (guanine-N(7)-)-methyltransferase (231 aa).

Residues E62, E87, D114, and D137 each coordinate S-adenosyl-L-methionine. D137 is a catalytic residue. Residues K141, D173, and 210–213 (TKFE) contribute to the substrate site.

This sequence belongs to the class I-like SAM-binding methyltransferase superfamily. TrmB family.

It catalyses the reaction guanosine(46) in tRNA + S-adenosyl-L-methionine = N(7)-methylguanosine(46) in tRNA + S-adenosyl-L-homocysteine. It participates in tRNA modification; N(7)-methylguanine-tRNA biosynthesis. Its function is as follows. Catalyzes the formation of N(7)-methylguanine at position 46 (m7G46) in tRNA. In Methylococcus capsulatus (strain ATCC 33009 / NCIMB 11132 / Bath), this protein is tRNA (guanine-N(7)-)-methyltransferase.